The following is a 228-amino-acid chain: MPKLILCRHGQSEWNAKNLFTGWEDVQLSEQGRNEAITSGRKLKENGIEIDVAFTSLLTRALETTQFLLAESDQEWIPVHKSWRLNERHYGKLQGLNKDEARKEFGEEQVHQWRRSYDVKPPAQTEEQRESYLKDRRYRHLDHRMMPYSESLKTTLERVVPIWTDKISQHLLDGETVLVAAHGNSIRALIKYLDNVSDEDIIGYEIKTGAPLIYELDDNLNVIDHYYL.

Substrate-binding positions include Arg-8–Asn-15, Thr-21–Gly-22, Arg-60, Glu-87–Tyr-90, Lys-98, Arg-114–Arg-115, and Gly-183–Asn-184. Residue His-9 is the Tele-phosphohistidine intermediate of the active site. Glu-87 serves as the catalytic Proton donor/acceptor.

The protein belongs to the phosphoglycerate mutase family. BPG-dependent PGAM subfamily.

The enzyme catalyses (2R)-2-phosphoglycerate = (2R)-3-phosphoglycerate. It functions in the pathway carbohydrate degradation; glycolysis; pyruvate from D-glyceraldehyde 3-phosphate: step 3/5. Functionally, catalyzes the interconversion of 2-phosphoglycerate and 3-phosphoglycerate. This is 2,3-bisphosphoglycerate-dependent phosphoglycerate mutase from Staphylococcus haemolyticus (strain JCSC1435).